A 169-amino-acid polypeptide reads, in one-letter code: Crossover junction endodeoxyribonuclease RuvC (169 aa).

Residues Asp11, Glu71, and Asp143 contribute to the active site. Residues Asp11, Glu71, and Asp143 each contribute to the Mg(2+) site.

Belongs to the RuvC family. As to quaternary structure, homodimer which binds Holliday junction (HJ) DNA. The HJ becomes 2-fold symmetrical on binding to RuvC with unstacked arms; it has a different conformation from HJ DNA in complex with RuvA. In the full resolvosome a probable DNA-RuvA(4)-RuvB(12)-RuvC(2) complex forms which resolves the HJ. The cofactor is Mg(2+).

The protein resides in the cytoplasm. It carries out the reaction Endonucleolytic cleavage at a junction such as a reciprocal single-stranded crossover between two homologous DNA duplexes (Holliday junction).. In terms of biological role, the RuvA-RuvB-RuvC complex processes Holliday junction (HJ) DNA during genetic recombination and DNA repair. Endonuclease that resolves HJ intermediates. Cleaves cruciform DNA by making single-stranded nicks across the HJ at symmetrical positions within the homologous arms, yielding a 5'-phosphate and a 3'-hydroxyl group; requires a central core of homology in the junction. The consensus cleavage sequence is 5'-(A/T)TT(C/G)-3'. Cleavage occurs on the 3'-side of the TT dinucleotide at the point of strand exchange. HJ branch migration catalyzed by RuvA-RuvB allows RuvC to scan DNA until it finds its consensus sequence, where it cleaves and resolves the cruciform DNA. In Bartonella quintana (strain Toulouse) (Rochalimaea quintana), this protein is Crossover junction endodeoxyribonuclease RuvC.